Reading from the N-terminus, the 393-residue chain is ATP phosphoribosyltransferase regulatory subunit (393 aa).

Belongs to the class-II aminoacyl-tRNA synthetase family. HisZ subfamily. In terms of assembly, heteromultimer composed of HisG and HisZ subunits.

It localises to the cytoplasm. The protein operates within amino-acid biosynthesis; L-histidine biosynthesis; L-histidine from 5-phospho-alpha-D-ribose 1-diphosphate: step 1/9. In terms of biological role, required for the first step of histidine biosynthesis. May allow the feedback regulation of ATP phosphoribosyltransferase activity by histidine. The chain is ATP phosphoribosyltransferase regulatory subunit from Nitrosospira multiformis (strain ATCC 25196 / NCIMB 11849 / C 71).